Consider the following 242-residue polypeptide: Stress response regulator protein 1 (242 aa).

Residues 118–236 enclose the Response regulatory domain; it reads NFLLVDDNFI…FDHIITCIEK (119 aa). D169 carries the post-translational modification 4-aspartylphosphate.

Functionally, required for stress adaptation, morphogenesis and virulence. The protein is Stress response regulator protein 1 (SRR1) of Debaryomyces hansenii (strain ATCC 36239 / CBS 767 / BCRC 21394 / JCM 1990 / NBRC 0083 / IGC 2968) (Yeast).